The following is a 43-amino-acid chain: Protein PsbN (43 aa).

A helical transmembrane segment spans residues 7-27; sequence VAIFISGLLVSFTGYALYTAF.

Belongs to the PsbN family.

The protein resides in the plastid. It is found in the chloroplast thylakoid membrane. May play a role in photosystem I and II biogenesis. The chain is Protein PsbN from Daucus carota (Wild carrot).